The primary structure comprises 695 residues: MAKKKGDEKANPAPQSDNEEQNFEEEPDFDDPEDFVEIPEEELLADILEQKPKESDGYENVVVVDGCPQVGPERLEKLQSVINKIFSKFGKIVNEYYPTTENGLTTGYIFLEYSNPQNAAEAVKATNNCKLDKQHTFLVNLFTDFQKYSDIPKEWEPPAPQPFKVQSDLQWYLMDPDAYDQFLVGIGTGVALQVWQNALPEPLLLQERPNWTETYAVWSPLGTYLATFHWRGVALWAGPKFSQFQKFFHPEARFISFSPCENYMVTFSPSGDRGDDKKWIIGDIRTGQEKRSFPPPDEYVTWPIFRWSKDDRFFARIGADVLSVYETPGFGLLDKKSIKIPGIRDFSWSPSDNTLAYWVAEDKDVPARVTLLEIPNRTEVRSKNLFSVADCKIHWQKSGDYLCVKVDRYSKVKKDKIDIKYSGMYYNFEIFHMREKEIPVDSVEIKEPIQAFAWEPVGSKFSIIHGDPANISISFYQVNTGQAPTLLKKFERKPFNHLFWSPSGQFIVLANLGLTGGALEFLDTNDFTIMNVADHYQMSGIEWDPTGRYVVTGVSSLKCKMDCGYYIWSFQGKILRRVMKEGFAQFHWRPRPPTLLSEKQQKEIKKNLKKYYSQFESKDRMRSSKASKELVAKRTEQMKKFTEYRESKIQEWNEQKPRRLELRDYVDTDGLDTDAVNTVEEVIEFFVKEEQTVIE.

Positions 1 to 10 (MAKKKGDEKA) are enriched in basic and acidic residues. The tract at residues 1-43 (MAKKKGDEKANPAPQSDNEEQNFEEEPDFDDPEDFVEIPEEEL) is disordered. Residues 17–43 (DNEEQNFEEEPDFDDPEDFVEIPEEEL) are compositionally biased toward acidic residues. In terms of domain architecture, RRM spans 60–144 (NVVVVDGCPQ…HTFLVNLFTD (85 aa)). WD repeat units lie at residues 164-205 (KVQS…PLLL), 295-335 (PPDE…LLDK), 338-373 (IKIP…TLLE), and 444-486 (EIKE…APTL).

The protein belongs to the eIF-3 subunit B family. Component of the eukaryotic translation initiation factor 3 (eIF-3) complex.

It is found in the cytoplasm. RNA-binding component of the eukaryotic translation initiation factor 3 (eIF-3) complex, which is involved in protein synthesis of a specialized repertoire of mRNAs and, together with other initiation factors, stimulates binding of mRNA and methionyl-tRNAi to the 40S ribosome. The eIF-3 complex specifically targets and initiates translation of a subset of mRNAs involved in cell proliferation. This Bombyx mori (Silk moth) protein is Eukaryotic translation initiation factor 3 subunit B.